The sequence spans 341 residues: Outer membrane protein assembly factor BamD (341 aa).

The first 17 residues, 1–17 (MQVKHLLLIAILALTAA), serve as a signal peptide directing secretion. The N-palmitoyl cysteine moiety is linked to residue Cys18. Cys18 carries S-diacylglycerol cysteine lipidation. Residues 289–316 (DVIKQYEDAEREIPAELKPENQDHSADD) show a composition bias toward basic and acidic residues. A disordered region spans residues 289-330 (DVIKQYEDAEREIPAELKPENQDHSADDEKPESDDDEDSGRS). A compositionally biased stretch (acidic residues) spans 317–326 (EKPESDDDED).

The protein belongs to the BamD family. Part of the Bam complex.

The protein localises to the cell outer membrane. In terms of biological role, part of the outer membrane protein assembly complex, which is involved in assembly and insertion of beta-barrel proteins into the outer membrane. The sequence is that of Outer membrane protein assembly factor BamD from Pseudomonas aeruginosa (strain ATCC 15692 / DSM 22644 / CIP 104116 / JCM 14847 / LMG 12228 / 1C / PRS 101 / PAO1).